The sequence spans 145 residues: 3-dehydroquinate dehydratase (145 aa).

The active-site Proton acceptor is Tyr-23. The substrate site is built by Asn-75, His-81, and Asp-88. The Proton donor role is filled by His-101. Residues Leu-102–Ser-103 and Arg-112 contribute to the substrate site.

The protein belongs to the type-II 3-dehydroquinase family. As to quaternary structure, homododecamer.

It catalyses the reaction 3-dehydroquinate = 3-dehydroshikimate + H2O. It participates in metabolic intermediate biosynthesis; chorismate biosynthesis; chorismate from D-erythrose 4-phosphate and phosphoenolpyruvate: step 3/7. Its function is as follows. Catalyzes a trans-dehydration via an enolate intermediate. The sequence is that of 3-dehydroquinate dehydratase from Legionella pneumophila (strain Paris).